The chain runs to 397 residues: Serpin B10 (397 aa).

Positions 74-77 (KKRK) match the Nuclear localization signal motif.

Belongs to the serpin family. Ov-serpin subfamily.

The protein localises to the nucleus. It localises to the cytoplasm. In terms of biological role, protease inhibitor that may play a role in the regulation of protease activities during hematopoiesis and apoptosis induced by TNF. May regulate protease activities in the cytoplasm and in the nucleus. This is Serpin B10 (SERPINB10) from Bos taurus (Bovine).